We begin with the raw amino-acid sequence, 31 residues long: Photosystem II reaction center protein T (31 aa).

The chain crosses the membrane as a helical span at residues 3 to 23; that stretch reads ALVYTFLLIGTLGIIFFAIFF.

The protein belongs to the PsbT family. In terms of assembly, PSII is composed of 1 copy each of membrane proteins PsbA, PsbB, PsbC, PsbD, PsbE, PsbF, PsbH, PsbI, PsbJ, PsbK, PsbL, PsbM, PsbT, PsbY, PsbZ, Psb30/Ycf12, at least 3 peripheral proteins of the oxygen-evolving complex and a large number of cofactors. It forms dimeric complexes.

It localises to the plastid. It is found in the chloroplast thylakoid membrane. Functionally, found at the monomer-monomer interface of the photosystem II (PS II) dimer, plays a role in assembly and dimerization of PSII. PSII is a light-driven water plastoquinone oxidoreductase, using light energy to abstract electrons from H(2)O, generating a proton gradient subsequently used for ATP formation. The chain is Photosystem II reaction center protein T from Stigeoclonium helveticum (Green alga).